The chain runs to 196 residues: MFITFEGIDGSGKTTQSKLLANHFKQIRGENNVVLTREPGGTNFAEKVRGVLLTNNIDSISELLLLISMRREHMKKLILPALAEGKIVICDRFIDSTIAYQGYGFGVDLRLIRDLHKLVEIKYPDITFILDIDVKVGLNRAKDKNKYEEMDVNFYNKVRKGFQEIAIKEPVRCSVITGIETKNDNHVHNEIIDKIT.

7 to 14 contributes to the ATP binding site; the sequence is GIDGSGKT.

The protein belongs to the thymidylate kinase family.

The enzyme catalyses dTMP + ATP = dTDP + ADP. Functionally, phosphorylation of dTMP to form dTDP in both de novo and salvage pathways of dTTP synthesis. In Wolbachia pipientis wMel, this protein is Thymidylate kinase.